The sequence spans 659 residues: Hemocyanin subunit B (659 aa).

The first 18 residues, 1–18 (MVAKWCVLAMCLLVAVGA), serve as a signal peptide directing secretion. Residues His-198, His-202, and His-232 each contribute to the Cu cation site. Asn-318 carries N-linked (GlcNAc...) asparagine glycosylation. Positions 353, 357, and 393 each coordinate Cu cation. Cys-562 and Cys-609 are joined by a disulfide.

Belongs to the tyrosinase family. Hemocyanin subfamily. As to quaternary structure, 36-chain polymer consisting of 6 hexamers, each of which includes 4 different chains, A, B, C and D. As to expression, hemolymph.

Its subcellular location is the secreted. It is found in the extracellular space. Its function is as follows. Hemocyanins are copper-containing oxygen carriers occurring freely dissolved in the hemolymph of many mollusks and arthropods. The polypeptide is Hemocyanin subunit B (HCB) (Scutigera coleoptrata (House centipede)).